The chain runs to 337 residues: tRNA N6-adenosine threonylcarbamoyltransferase (337 aa).

Positions 111 and 115 each coordinate Fe cation. Residues 134-138 (LVSGG), Asp167, Gly180, and Asn272 each bind substrate. Asp300 contacts Fe cation.

Belongs to the KAE1 / TsaD family. Requires Fe(2+) as cofactor.

It is found in the cytoplasm. It carries out the reaction L-threonylcarbamoyladenylate + adenosine(37) in tRNA = N(6)-L-threonylcarbamoyladenosine(37) in tRNA + AMP + H(+). In terms of biological role, required for the formation of a threonylcarbamoyl group on adenosine at position 37 (t(6)A37) in tRNAs that read codons beginning with adenine. Is involved in the transfer of the threonylcarbamoyl moiety of threonylcarbamoyl-AMP (TC-AMP) to the N6 group of A37, together with TsaE and TsaB. TsaD likely plays a direct catalytic role in this reaction. The chain is tRNA N6-adenosine threonylcarbamoyltransferase from Yersinia enterocolitica serotype O:8 / biotype 1B (strain NCTC 13174 / 8081).